The following is a 142-amino-acid chain: Large ribosomal subunit protein uL11 (142 aa).

Belongs to the universal ribosomal protein uL11 family. Part of the ribosomal stalk of the 50S ribosomal subunit. Interacts with L10 and the large rRNA to form the base of the stalk. L10 forms an elongated spine to which L12 dimers bind in a sequential fashion forming a multimeric L10(L12)X complex. One or more lysine residues are methylated.

In terms of biological role, forms part of the ribosomal stalk which helps the ribosome interact with GTP-bound translation factors. This is Large ribosomal subunit protein uL11 from Brucella abortus (strain S19).